The following is a 232-amino-acid chain: Putative caffeoyl-CoA O-methyltransferase At1g67980 (232 aa).

Lysine 8 serves as a coordination point for substrate. Residues valine 52, glutamate 74, glycine 76–valine 77, serine 82, and aspartate 100 contribute to the S-adenosyl-L-methionine site. Aspartate 149 serves as a coordination point for substrate. Aspartate 149 is a binding site for a divalent metal cation. Residue aspartate 151 participates in S-adenosyl-L-methionine binding. Residues aspartate 175 and asparagine 176 each coordinate a divalent metal cation.

The protein belongs to the class I-like SAM-binding methyltransferase superfamily. Cation-dependent O-methyltransferase family. CCoAMT subfamily. A divalent metal cation serves as cofactor.

It carries out the reaction (E)-caffeoyl-CoA + S-adenosyl-L-methionine = (E)-feruloyl-CoA + S-adenosyl-L-homocysteine + H(+). Its pathway is aromatic compound metabolism; phenylpropanoid biosynthesis. Its function is as follows. Methylates caffeoyl-CoA to feruloyl-CoA and 5-hydroxyferuloyl-CoA to sinapoyl-CoA. Plays a role in the synthesis of feruloylated polysaccharides. Involved in the reinforcement of the plant cell wall. Also involved in the responding to wounding or pathogen challenge by the increased formation of cell wall-bound ferulic acid polymers. The chain is Putative caffeoyl-CoA O-methyltransferase At1g67980 from Arabidopsis thaliana (Mouse-ear cress).